The following is a 356-amino-acid chain: Dual-specificity RNA methyltransferase RlmN (356 aa).

The active-site Proton acceptor is the glutamate 87. Residues 106–339 (QEAKYTICVS…CTIRDSKGID (234 aa)) form the Radical SAM core domain. An intrachain disulfide couples cysteine 113 to cysteine 344. Residues cysteine 120, cysteine 124, and cysteine 127 each coordinate [4Fe-4S] cluster. S-adenosyl-L-methionine contacts are provided by residues 170–171 (GE), serine 202, 225–227 (SLH), and asparagine 301. The S-methylcysteine intermediate role is filled by cysteine 344.

Belongs to the radical SAM superfamily. RlmN family. [4Fe-4S] cluster is required as a cofactor.

The protein localises to the cytoplasm. The catalysed reaction is adenosine(2503) in 23S rRNA + 2 reduced [2Fe-2S]-[ferredoxin] + 2 S-adenosyl-L-methionine = 2-methyladenosine(2503) in 23S rRNA + 5'-deoxyadenosine + L-methionine + 2 oxidized [2Fe-2S]-[ferredoxin] + S-adenosyl-L-homocysteine. It catalyses the reaction adenosine(37) in tRNA + 2 reduced [2Fe-2S]-[ferredoxin] + 2 S-adenosyl-L-methionine = 2-methyladenosine(37) in tRNA + 5'-deoxyadenosine + L-methionine + 2 oxidized [2Fe-2S]-[ferredoxin] + S-adenosyl-L-homocysteine. Specifically methylates position 2 of adenine 2503 in 23S rRNA and position 2 of adenine 37 in tRNAs. m2A2503 modification seems to play a crucial role in the proofreading step occurring at the peptidyl transferase center and thus would serve to optimize ribosomal fidelity. In Sulfurimonas denitrificans (strain ATCC 33889 / DSM 1251) (Thiomicrospira denitrificans (strain ATCC 33889 / DSM 1251)), this protein is Dual-specificity RNA methyltransferase RlmN.